We begin with the raw amino-acid sequence, 558 residues long: CTP synthase (558 aa).

Residues 1–267 are amidoligase domain; sequence MAKFVFVTGG…CLEMLDVLNL (267 aa). Ser13 is a binding site for CTP. Ser13 lines the UTP pocket. Residues 14 to 19 and Asp71 contribute to the ATP site; that span reads SIGKGI. Residues Asp71 and Glu141 each contribute to the Mg(2+) site. CTP is bound by residues 148–150, 188–193, and Lys224; these read DIE and KTKPTQ. Residues 188-193 and Lys224 each bind UTP; that span reads KTKPTQ. Positions 292-534 constitute a Glutamine amidotransferase type-1 domain; it reads KVALVGKYVQ…IEAAQLRLPA (243 aa). An L-glutamine-binding site is contributed by Gly354. Catalysis depends on Cys381, which acts as the Nucleophile; for glutamine hydrolysis. L-glutamine-binding positions include 382–385, Glu405, and Arg462; that span reads LGMQ. Active-site residues include His507 and Glu509. A disordered region spans residues 536 to 558; that stretch reads PDEALRRQSQTNISAQEQPSRIG. Over residues 542–558 the composition is skewed to polar residues; the sequence is RQSQTNISAQEQPSRIG.

Belongs to the CTP synthase family. As to quaternary structure, homotetramer.

It carries out the reaction UTP + L-glutamine + ATP + H2O = CTP + L-glutamate + ADP + phosphate + 2 H(+). The enzyme catalyses L-glutamine + H2O = L-glutamate + NH4(+). It catalyses the reaction UTP + NH4(+) + ATP = CTP + ADP + phosphate + 2 H(+). It participates in pyrimidine metabolism; CTP biosynthesis via de novo pathway; CTP from UDP: step 2/2. Allosterically activated by GTP, when glutamine is the substrate; GTP has no effect on the reaction when ammonia is the substrate. The allosteric effector GTP functions by stabilizing the protein conformation that binds the tetrahedral intermediate(s) formed during glutamine hydrolysis. Inhibited by the product CTP, via allosteric rather than competitive inhibition. Catalyzes the ATP-dependent amination of UTP to CTP with either L-glutamine or ammonia as the source of nitrogen. Regulates intracellular CTP levels through interactions with the four ribonucleotide triphosphates. This chain is CTP synthase, found in Prochlorococcus marinus (strain MIT 9313).